We begin with the raw amino-acid sequence, 162 residues long: UPF0102 protein Bpet0439 (162 aa).

The disordered stretch occupies residues Q15–A52. Over residues Q20–A32 the composition is skewed to basic residues. Over residues R33–R48 the composition is skewed to low complexity.

Belongs to the UPF0102 family.

This is UPF0102 protein Bpet0439 from Bordetella petrii (strain ATCC BAA-461 / DSM 12804 / CCUG 43448).